Here is a 458-residue protein sequence, read N- to C-terminus: Translation initiation factor eIF2B subunit gamma (458 aa).

Position 291 is a phosphoserine (Ser-291).

The protein belongs to the eIF-2B gamma/epsilon subunits family. In terms of assembly, component of the translation initiation factor 2B (eIF2B) complex which is a heterodecamer of two sets of five different subunits: alpha, beta, gamma, delta and epsilon. Subunits alpha, beta and delta comprise a regulatory subcomplex and subunits epsilon and gamma comprise a catalytic subcomplex. Within the complex, the hexameric regulatory complex resides at the center, with the two heterodimeric catalytic subcomplexes bound on opposite sides.

Its subcellular location is the cytoplasm. It is found in the cytosol. In terms of biological role, acts as a component of the translation initiation factor 2B (eIF2B) complex, which catalyzes the exchange of GDP for GTP on the eukaryotic initiation factor 2 (eIF2) complex gamma subunit. Its guanine nucleotide exchange factor activity is repressed when bound to eIF2 complex phosphorylated on the alpha subunit, thereby limiting the amount of methionyl-initiator methionine tRNA available to the ribosome and consequently global translation is repressed. This is Translation initiation factor eIF2B subunit gamma (tif223) from Schizosaccharomyces pombe (strain 972 / ATCC 24843) (Fission yeast).